We begin with the raw amino-acid sequence, 150 residues long: MKVVVQRVKRAAVTNKSIHNEIDKGFCLLVGIGKDTTEADIDAVAKKIINARLFEDENGKLNLNIQQVEGQILSISQFTLYADVRKGNRPGFSNSKNPEEANVLYEKFNTALKAYDVEVKTGEFGTDMEVEIINDGPVTIIYESQDGKII.

Positions Gly136–Pro137 match the Gly-cisPro motif, important for rejection of L-amino acids motif.

The protein belongs to the DTD family. As to quaternary structure, homodimer.

It localises to the cytoplasm. The enzyme catalyses glycyl-tRNA(Ala) + H2O = tRNA(Ala) + glycine + H(+). It carries out the reaction a D-aminoacyl-tRNA + H2O = a tRNA + a D-alpha-amino acid + H(+). Functionally, an aminoacyl-tRNA editing enzyme that deacylates mischarged D-aminoacyl-tRNAs. Also deacylates mischarged glycyl-tRNA(Ala), protecting cells against glycine mischarging by AlaRS. Acts via tRNA-based rather than protein-based catalysis; rejects L-amino acids rather than detecting D-amino acids in the active site. By recycling D-aminoacyl-tRNA to D-amino acids and free tRNA molecules, this enzyme counteracts the toxicity associated with the formation of D-aminoacyl-tRNA entities in vivo and helps enforce protein L-homochirality. In Staphylococcus haemolyticus (strain JCSC1435), this protein is D-aminoacyl-tRNA deacylase.